The chain runs to 529 residues: Beta-galactoside alpha-2,6-sialyltransferase 2 (529 aa).

The Cytoplasmic segment spans residues 1–11 (MKPHLKQWRQR). Residues 12–32 (MLFGIFAWGLLFLLIFIYFTD) form a helical; Signal-anchor for type II membrane protein membrane-spanning segment. The Lumenal segment spans residues 33–529 (SNPAEPVPSS…PAPSPVIPHS (497 aa)). Ser69 carries an O-linked (GalNAc...) serine glycan. N-linked (GlcNAc...) asparagine glycosylation is present at Asn211. 3 disulfide bridges follow: Cys253-Cys519, Cys296-Cys448, and Cys466-Cys477.

This sequence belongs to the glycosyltransferase 29 family. O-glycosylated. As to expression, weakly expressed in some tissues, such as small intestine, colon and fetal brain.

The protein localises to the golgi apparatus. It is found in the golgi stack membrane. The enzyme catalyses a beta-D-galactoside + CMP-N-acetyl-beta-neuraminate = an N-acetyl-alpha-neuraminyl-(2-&gt;6)-beta-D-galactosyl derivative + CMP + H(+). In terms of biological role, transfers sialic acid from the donor of substrate CMP-sialic acid to galactose containing acceptor substrates. Has alpha-2,6-sialyltransferase activity toward oligosaccharides that have the Gal-beta-1,4-GlcNAc sequence at the non-reducing end of their carbohydrate groups, but it has weak or no activities toward glycoproteins and glycolipids. This is Beta-galactoside alpha-2,6-sialyltransferase 2 (ST6GAL2) from Homo sapiens (Human).